A 476-amino-acid chain; its full sequence is Aspartyl/glutamyl-tRNA(Asn/Gln) amidotransferase subunit B (476 aa).

The protein belongs to the GatB/GatE family. GatB subfamily. As to quaternary structure, heterotrimer of A, B and C subunits.

It catalyses the reaction L-glutamyl-tRNA(Gln) + L-glutamine + ATP + H2O = L-glutaminyl-tRNA(Gln) + L-glutamate + ADP + phosphate + H(+). It carries out the reaction L-aspartyl-tRNA(Asn) + L-glutamine + ATP + H2O = L-asparaginyl-tRNA(Asn) + L-glutamate + ADP + phosphate + 2 H(+). Allows the formation of correctly charged Asn-tRNA(Asn) or Gln-tRNA(Gln) through the transamidation of misacylated Asp-tRNA(Asn) or Glu-tRNA(Gln) in organisms which lack either or both of asparaginyl-tRNA or glutaminyl-tRNA synthetases. The reaction takes place in the presence of glutamine and ATP through an activated phospho-Asp-tRNA(Asn) or phospho-Glu-tRNA(Gln). This is Aspartyl/glutamyl-tRNA(Asn/Gln) amidotransferase subunit B from Geobacillus thermodenitrificans (strain NG80-2).